A 507-amino-acid chain; its full sequence is RNA polymerase I-specific transcription initiation factor RRN11 (507 aa).

The segment covering 37 to 47 has biased composition (polar residues); the sequence is KSTTTDSLPTP. Disordered regions lie at residues 37–76 and 89–124; these read KSTT…LQQK and GEIY…SDEE. Positions 97 to 108 are enriched in acidic residues; it reads SETDSQEEETEE. Residues 109 to 124 are compositionally biased toward basic and acidic residues; the sequence is GGEHDTGIDKEDSDEE.

Component of the core factor (CF) complex, which consists of RRN6, RRN7 and RRN11. The CF heterotrimer may further dimerize to form a hexamer. RRN11 interacts with RRN6, RRN7 and SPT15.

It localises to the nucleus. It is found in the nucleolus. Acts as a component of the core factor (CF) complex which is essential for the initiation of rDNA transcription by RNA polymerase I. After binding of UAF (upstream activation factor) to an upstream element of the promoter, CF is recruited in a SPT15/TBP-dependent manner to form a preinitiation complex. The protein is RNA polymerase I-specific transcription initiation factor RRN11 (RRN11) of Saccharomyces cerevisiae (strain ATCC 204508 / S288c) (Baker's yeast).